Consider the following 62-residue polypeptide: Conotoxin Cal12.2e (62 aa).

Residues 1-19 (MKLTCVLVVLLLVLPFGDL) form the signal peptide.

The protein belongs to the conotoxin O1 superfamily. Contains 4 disulfide bonds. As to expression, expressed by the venom duct.

Its subcellular location is the secreted. Functionally, probable neurotoxin. The protein is Conotoxin Cal12.2e of Californiconus californicus (California cone).